Consider the following 122-residue polypeptide: Semaphorin-like protein A43 (122 aa).

In terms of domain architecture, Sema spans 1–122 (MIYLYTADNV…RIMYLFYEYH (122 aa)).

It belongs to the semaphorin family.

This is Semaphorin-like protein A43 (A43R) from Homo sapiens (Human).